The sequence spans 279 residues: Ribosomal RNA small subunit methyltransferase I (279 aa).

It belongs to the methyltransferase superfamily. RsmI family.

It is found in the cytoplasm. It catalyses the reaction cytidine(1402) in 16S rRNA + S-adenosyl-L-methionine = 2'-O-methylcytidine(1402) in 16S rRNA + S-adenosyl-L-homocysteine + H(+). Its function is as follows. Catalyzes the 2'-O-methylation of the ribose of cytidine 1402 (C1402) in 16S rRNA. This Synechocystis sp. (strain ATCC 27184 / PCC 6803 / Kazusa) protein is Ribosomal RNA small subunit methyltransferase I.